A 172-amino-acid chain; its full sequence is NADH-quinone oxidoreductase subunit B (172 aa).

Residues C46, C47, C111, and C141 each coordinate [4Fe-4S] cluster.

It belongs to the complex I 20 kDa subunit family. In terms of assembly, NDH-1 is composed of 14 different subunits. Subunits NuoB, C, D, E, F, and G constitute the peripheral sector of the complex. The cofactor is [4Fe-4S] cluster.

Its subcellular location is the cell membrane. It carries out the reaction a quinone + NADH + 5 H(+)(in) = a quinol + NAD(+) + 4 H(+)(out). NDH-1 shuttles electrons from NADH, via FMN and iron-sulfur (Fe-S) centers, to quinones in the respiratory chain. The immediate electron acceptor for the enzyme in this species is believed to be a menaquinone. Couples the redox reaction to proton translocation (for every two electrons transferred, four hydrogen ions are translocated across the cytoplasmic membrane), and thus conserves the redox energy in a proton gradient. The protein is NADH-quinone oxidoreductase subunit B of Bacillus anthracis (strain A0248).